The chain runs to 124 residues: Ribonuclease pancreatic (124 aa).

The segment covering 1–13 (KESAAAKFERQHI) has biased composition (basic and acidic residues). The disordered stretch occupies residues 1–23 (KESAAAKFERQHIDSSTSSVSSS). 2 residues coordinate substrate: Lys-7 and Arg-10. His-12 acts as the Proton acceptor in catalysis. Disulfide bonds link Cys-26–Cys-84, Cys-40–Cys-95, Cys-58–Cys-110, and Cys-65–Cys-72. N-linked (GlcNAc...) asparagine glycosylation occurs at Asn-34. Substrate is bound by residues 41 to 45 (KPVNT), Lys-66, and Arg-85. His-119 acts as the Proton donor in catalysis.

This sequence belongs to the pancreatic ribonuclease family. As to quaternary structure, monomer. Interacts with and forms tight 1:1 complexes with RNH1. Dimerization of two such complexes may occur. Interaction with RNH1 inhibits this protein. In terms of tissue distribution, pancreas.

Its subcellular location is the secreted. It carries out the reaction an [RNA] containing cytidine + H2O = an [RNA]-3'-cytidine-3'-phosphate + a 5'-hydroxy-ribonucleotide-3'-[RNA].. It catalyses the reaction an [RNA] containing uridine + H2O = an [RNA]-3'-uridine-3'-phosphate + a 5'-hydroxy-ribonucleotide-3'-[RNA].. In terms of biological role, endonuclease that catalyzes the cleavage of RNA on the 3' side of pyrimidine nucleotides. Acts on single-stranded and double-stranded RNA. The polypeptide is Ribonuclease pancreatic (RNASE1) (Giraffa camelopardalis (Giraffe)).